We begin with the raw amino-acid sequence, 193 residues long: dCTP deaminase (193 aa).

DCTP-binding positions include 110–115 (RSSLAR), D128, 136–138 (VLE), Y171, K178, and Q182. E138 acts as the Proton donor/acceptor in catalysis.

It belongs to the dCTP deaminase family. In terms of assembly, homotrimer.

The enzyme catalyses dCTP + H2O + H(+) = dUTP + NH4(+). It participates in pyrimidine metabolism; dUMP biosynthesis; dUMP from dCTP (dUTP route): step 1/2. Its function is as follows. Catalyzes the deamination of dCTP to dUTP. In Tolumonas auensis (strain DSM 9187 / NBRC 110442 / TA 4), this protein is dCTP deaminase.